The sequence spans 271 residues: MPLSSQPAILIIGGAEDKVHGREILQTFWSRSGGNDAIIGIIPSASREPLLIGERYQTIFSDMGVKELKVLDIRDRAQGDDSGYRLFVEQCTGIFMTGGDQLRLCGLLADTPLMDRIRQRVHNGEISLAGTSAGAAVMGHHMIAGGSSGEWPNRALVDMAVGLGIVPEIVVDQHFHNRNRMARLLSAISTHPELLGLGIDEDTCAMFERDGSVKVIGQGTVSFVDARDMSYTNAALVGANAPLSLHNLRLNILVHGEVYHQVKQRAFPRVT.

Catalysis depends on charge relay system residues Ser132, His174, and Glu201.

The protein belongs to the peptidase S51 family. In terms of assembly, homodimer.

The enzyme catalyses [L-4-(L-arginin-2-N-yl)aspartate](n) + H2O = [L-4-(L-arginin-2-N-yl)aspartate](n-1) + L-4-(L-arginin-2-N-yl)aspartate. Exopeptidase that catalyzes the hydrolytic cleavage of multi-L-arginyl-poly-L-aspartic acid (cyanophycin; a water-insoluble reserve polymer) into aspartate-arginine dipeptides. The polypeptide is Cyanophycinase (cphB) (Synechocystis sp. (strain ATCC 27184 / PCC 6803 / Kazusa)).